The primary structure comprises 86 residues: Triosephosphate isomerase (86 aa).

E62 serves as the catalytic Proton acceptor.

It belongs to the triosephosphate isomerase family. In terms of assembly, homodimer.

The catalysed reaction is D-glyceraldehyde 3-phosphate = dihydroxyacetone phosphate. Its pathway is carbohydrate biosynthesis; gluconeogenesis. It functions in the pathway carbohydrate degradation; glycolysis; D-glyceraldehyde 3-phosphate from glycerone phosphate: step 1/1. This Platanus orientalis (Oriental plane-tree) protein is Triosephosphate isomerase.